Reading from the N-terminus, the 390-residue chain is GTPase Obg (390 aa).

The region spanning 1-159 is the Obg domain; it reads MKFVDEASIL…RDLLLELMLL (159 aa). Positions 127-147 are disordered; that stretch reads NTRFKSSVNRTPRQKTNGTPG. The span at 129-145 shows a compositional bias: polar residues; the sequence is RFKSSVNRTPRQKTNGT. The 174-residue stretch at 160-333 folds into the OBG-type G domain; sequence ADVGMLGMPN…LCWDVMTFII (174 aa). Residues 166–173, 191–195, 213–216, 283–286, and 314–316 each bind GTP; these read GMPNAGKS, FTTLV, DIPG, NKID, and SAA. Ser-173 and Thr-193 together coordinate Mg(2+).

The protein belongs to the TRAFAC class OBG-HflX-like GTPase superfamily. OBG GTPase family. In terms of assembly, monomer. The cofactor is Mg(2+).

Its subcellular location is the cytoplasm. An essential GTPase which binds GTP, GDP and possibly (p)ppGpp with moderate affinity, with high nucleotide exchange rates and a fairly low GTP hydrolysis rate. Plays a role in control of the cell cycle, stress response, ribosome biogenesis and in those bacteria that undergo differentiation, in morphogenesis control. The polypeptide is GTPase Obg (Salmonella gallinarum (strain 287/91 / NCTC 13346)).